Reading from the N-terminus, the 356-residue chain is tRNA N6-adenosine threonylcarbamoyltransferase (356 aa).

Positions 115 and 119 each coordinate Fe cation. Residues 138 to 142 (LVSGG), aspartate 171, glycine 184, and asparagine 283 each bind substrate. Aspartate 311 contacts Fe cation.

The protein belongs to the KAE1 / TsaD family. Requires Fe(2+) as cofactor.

It localises to the cytoplasm. The catalysed reaction is L-threonylcarbamoyladenylate + adenosine(37) in tRNA = N(6)-L-threonylcarbamoyladenosine(37) in tRNA + AMP + H(+). Required for the formation of a threonylcarbamoyl group on adenosine at position 37 (t(6)A37) in tRNAs that read codons beginning with adenine. Is involved in the transfer of the threonylcarbamoyl moiety of threonylcarbamoyl-AMP (TC-AMP) to the N6 group of A37, together with TsaE and TsaB. TsaD likely plays a direct catalytic role in this reaction. In Prochlorococcus marinus (strain MIT 9312), this protein is tRNA N6-adenosine threonylcarbamoyltransferase.